A 576-amino-acid polypeptide reads, in one-letter code: Flagellin B (576 aa).

This sequence belongs to the bacterial flagellin family. In terms of assembly, heteromer of FlaA and FlaB. Interacts with FliW. Interacts with FliS.

The protein localises to the secreted. It localises to the bacterial flagellum. In terms of biological role, flagellin is the subunit protein which polymerizes to form the filaments of bacterial flagella. The chain is Flagellin B (flaB) from Campylobacter jejuni subsp. jejuni serotype O:6 (strain 81116 / NCTC 11828).